A 215-amino-acid polypeptide reads, in one-letter code: Cytochrome b6 (215 aa).

A helical membrane pass occupies residues 32–52 (IFYCLGGITLTCFLVQVATGF). C35 contacts heme c. Heme b contacts are provided by H86 and H100. 3 helical membrane passes run 90-110 (ASMM…TGGF), 116-136 (LTWV…VTGY), and 186-206 (LHTF…FPMI). Residues H187 and H202 each coordinate heme b.

This sequence belongs to the cytochrome b family. PetB subfamily. In terms of assembly, the 4 large subunits of the cytochrome b6-f complex are cytochrome b6, subunit IV (17 kDa polypeptide, PetD), cytochrome f and the Rieske protein, while the 4 small subunits are PetG, PetL, PetM and PetN. The complex functions as a dimer. The cofactor is heme b. Requires heme c as cofactor.

The protein resides in the plastid. It localises to the chloroplast thylakoid membrane. Functionally, component of the cytochrome b6-f complex, which mediates electron transfer between photosystem II (PSII) and photosystem I (PSI), cyclic electron flow around PSI, and state transitions. This Vitis vinifera (Grape) protein is Cytochrome b6.